The chain runs to 224 residues: Mannose-specific lectin 3 (224 aa).

2 consecutive Bulb-type lectin domains span residues 2-111 and 117-222; these read NNVL…PAAA and RNVL…VWST. Intrachain disulfides connect Cys-30–Cys-52 and Cys-145–Cys-170.

As to quaternary structure, heterotetramer of 2 domain 1 and 2 domain 2 chains arranged as a dimer of domain 1/domain 2 heterodimers.

Functionally, mannose-specific lectin. Has weak agglutinating activity towards trypsin-treated erythrocytes from rabbit but not from human. The polypeptide is Mannose-specific lectin 3 (Crocus vernus (Dutch crocus)).